Consider the following 913-residue polypeptide: Eukaryotic translation initiation factor 3 subunit C (913 aa).

Residues 1-31 are disordered; that stretch reads MSRFFANGSDSESESSEEEVQASNFNKANNF. A compositionally biased stretch (acidic residues) spans 11–20; sequence SESESSEEEV. A compositionally biased stretch (polar residues) spans 21–31; it reads QASNFNKANNF. Phosphoserine is present on residues Ser-34, Ser-165, Ser-177, and Ser-186. Disordered regions lie at residues 157 to 195 and 208 to 285; these read FREAPDQESDVDEGEGEAHDSDAERAGADSDGGIGAGTG and PTKV…EDGE. The segment covering 162–171 has biased composition (acidic residues); it reads DQESDVDEGE. The span at 172 to 184 shows a compositional bias: basic and acidic residues; it reads GEAHDSDAERAGA. Positions 214–239 are enriched in acidic residues; the sequence is DEDDSDDSIDWDSDTESETESSEDEN. The span at 244-263 shows a compositional bias: basic and acidic residues; that stretch reads MRERFLKRTTEKEDKDDDKR. A compositionally biased stretch (basic residues) spans 264–276; sequence KDKRKEQKHKVRK. The region spanning 645–821 is the PCI domain; it reads FHMHINLELL…ETVVMHRSEP (177 aa). A disordered region spans residues 856–913; that stretch reads RGNMGNRDRGYNRNQNNQGGNWGGQRRDNRNQRNRNQRGHHKQQQQQQQQQVQTIEEE. Positions 887–898 are enriched in basic residues; it reads QRNRNQRGHHKQ.

This sequence belongs to the eIF-3 subunit C family. Component of the eukaryotic translation initiation factor 3 (eIF-3) complex. The eIF-3 complex interacts with pix.

It is found in the cytoplasm. Component of the eukaryotic translation initiation factor 3 (eIF-3) complex, which is involved in protein synthesis of a specialized repertoire of mRNAs and, together with other initiation factors, stimulates binding of mRNA and methionyl-tRNAi to the 40S ribosome. The eIF-3 complex specifically targets and initiates translation of a subset of mRNAs involved in cell proliferation. This is Eukaryotic translation initiation factor 3 subunit C from Drosophila virilis (Fruit fly).